The chain runs to 223 residues: Proteinase inhibitor type-2 TR8 (223 aa).

Residues 1 to 24 form the signal peptide; the sequence is MAIYKVALLLLFGMILLASDFEHA. Tandem repeats lie at residues 24 to 81, 88 to 145, and 152 to 209. Intrachain disulfides connect Cys27–Cys120, Cys31–Cys116, Cys40–Cys126, Cys52–Cys95, Cys55–Cys73, Cys56–Cys91, Cys62–Cys104, and Cys119–Cys137.

It belongs to the protease inhibitor I20 (potato type II proteinase inhibitor) family.

This is Proteinase inhibitor type-2 TR8 (ARPI) from Solanum lycopersicum (Tomato).